The primary structure comprises 576 residues: Kinetochore-associated protein DSN1 (576 aa).

Positions 1 to 11 (MSLEPTQTVSG) are enriched in polar residues. 4 disordered regions span residues 1–22 (MSLE…RTHK), 35–64 (LESD…NKQS), 185–205 (YSQP…ISSS), and 227–246 (QPHY…SQRG). Basic residues predominate over residues 235 to 246 (RERKKSIGSQRG). Phosphoserine is present on serine 250. The interval 412–437 (RSRRKFSERRKALPKEPKKLLPNSKN) is disordered. Residues 420-430 (RRKALPKEPKK) show a composition bias toward basic and acidic residues.

As to quaternary structure, component of the MIND kinetochore complex, which is composed of at least MTW1, NNF1, NSL1 and DSN1. Interacts with NSL1.

It is found in the nucleus. The protein localises to the chromosome. The protein resides in the centromere. Its subcellular location is the kinetochore. Functionally, acts as an essential component of the kinetochore MIND complex, which is required for the spindle checkpoint and kinetochore integrity. MIND plays a role in establishing a bipolar spindle-kinetochore interaction by joining kinetochore subunits contacting DNA to those contacting microtubules. The chain is Kinetochore-associated protein DSN1 (DSN1) from Saccharomyces cerevisiae (strain ATCC 204508 / S288c) (Baker's yeast).